We begin with the raw amino-acid sequence, 460 residues long: A-type ATP synthase subunit B (460 aa).

It belongs to the ATPase alpha/beta chains family. In terms of assembly, has multiple subunits with at least A(3), B(3), C, D, E, F, H, I and proteolipid K(x).

The protein resides in the cell membrane. Its function is as follows. Component of the A-type ATP synthase that produces ATP from ADP in the presence of a proton gradient across the membrane. The B chain is a regulatory subunit. This Thermoplasma acidophilum (strain ATCC 25905 / DSM 1728 / JCM 9062 / NBRC 15155 / AMRC-C165) protein is A-type ATP synthase subunit B.